Here is a 296-residue protein sequence, read N- to C-terminus: 33 kDa chaperonin (296 aa).

Intrachain disulfides connect Cys-237-Cys-239 and Cys-270-Cys-273.

This sequence belongs to the HSP33 family. In terms of processing, under oxidizing conditions two disulfide bonds are formed involving the reactive cysteines. Under reducing conditions zinc is bound to the reactive cysteines and the protein is inactive.

It localises to the cytoplasm. Redox regulated molecular chaperone. Protects both thermally unfolding and oxidatively damaged proteins from irreversible aggregation. Plays an important role in the bacterial defense system toward oxidative stress. In Acetivibrio thermocellus (strain ATCC 27405 / DSM 1237 / JCM 9322 / NBRC 103400 / NCIMB 10682 / NRRL B-4536 / VPI 7372) (Clostridium thermocellum), this protein is 33 kDa chaperonin.